The primary structure comprises 311 residues: CARD domain-containing protein E10 (311 aa).

Residues 21–110 (IWDVERLCLE…EHLVDLLERA (90 aa)) enclose the CARD domain. Disordered regions lie at residues 125–181 (ESGA…GGVY), 203–230 (GAGR…GGRD), and 243–311 (IPEP…FFCC). The segment covering 140 to 152 (EDNSGYTALLPTN) has biased composition (polar residues). Residues 252 to 272 (SGGGGRGGGVRYDAGGDGRLG) are compositionally biased toward gly residues.

It localises to the host cell membrane. Its function is as follows. Activates host NF-kappa-B and JNK pathways. Induces hyperphosphorylation and redistribution of host bcl-10 from the cytoplasm to the plasma membrane. The inhibitory effect of cellular bcl-10 on NF-kappa-B pathway is then overcome allowing NF-kappa-B activation. This Equus caballus (Horse) protein is CARD domain-containing protein E10 (E10).